The sequence spans 185 residues: MICQECHERPATFHFTKVVNGEKIEVHICEQCAKENSDSYGISANQGFSIHNLLSGLLNMDSSFQNAGTQMFSHSEQISACPKCGMTFQQFRKIGRFGCSECYKTFHSNITPILRKVHSGNTVHAGKIPKRIGGNLHVRRQIDMLKKELESLIHQEEFENAAHVRDQIRLLEQSLKSTDSEEEQE.

Arg-115 and Arg-169 each carry phosphoarginine. The 36-residue stretch at 139–174 (RRQIDMLKKELESLIHQEEFENAAHVRDQIRLLEQS) folds into the UVR domain.

In terms of assembly, interacts with McsB. Phosphorylated on Arg residues by McsB.

Activates the phosphorylation activity of the protein-arginine kinase McsB. Is required for the delocalization of competence proteins from the cell poles. In Bacillus subtilis (strain 168), this protein is Protein-arginine kinase activator protein (mcsA).